The sequence spans 57 residues: Large ribosomal subunit protein bL32 (57 aa).

Basic residues predominate over residues 1–16 (MAVQKSRKTRSKRGMR). Residues 1–45 (MAVQKSRKTRSKRGMRRSHDALTAPAQLSVDATSGETHRRHHMTA) form a disordered region.

It belongs to the bacterial ribosomal protein bL32 family.

The sequence is that of Large ribosomal subunit protein bL32 from Psychromonas ingrahamii (strain DSM 17664 / CCUG 51855 / 37).